A 992-amino-acid chain; its full sequence is Leucine-rich repeat receptor-like serine/threonine-protein kinase BAM3 (992 aa).

The first 21 residues, 1–21, serve as a signal peptide directing secretion; sequence MADKIFTFFLILSSISPLLCS. Over 22-656 the chain is Extracellular; sequence SLISPLNLSL…ARSRGEISAK (635 aa). Asn-28 is a glycosylation site (N-linked (GlcNAc...) asparagine). A disulfide bridge connects residues Cys-64 and Cys-71. 2 N-linked (GlcNAc...) asparagine glycosylation sites follow: Asn-75 and Asn-87. LRR repeat units follow at residues 75-99, 100-124, 126-148, 150-173, 174-199, and 201-221; these read NQSI…ISRL, SPSL…IYEL, GLEV…GFSQ, TQLV…LTTL, TRLE…SFLS, and KFLS…LANI. N-linked (GlcNAc...) asparagine glycans are attached at residues Asn-131 and Asn-163. Residue Asn-220 is glycosylated (N-linked (GlcNAc...) asparagine). A CLE45 peptide binding motif is present at residues 226–231; it reads QLYLGY. LRR repeat units follow at residues 246–270, 271–294, 296–320, 322–342, 343–366, 368–391, 393–414, 415–438, 439–462, 465–489, 491–513, 514–536, 537–561, 563–585, and 586–610; these read LINL…LGNL, KNLE…LGNM, SLKT…GLQK, QLFN…VSEL, PDLQ…LGSN, NLIE…CFGR, LKIL…LGQC, EPLW…LIYL, PNLS…EAGN, FSSL…IRNL, SLQI…IGSL, KSLL…EFGD, CMSL…ISQI, ILNY…LGYM, and KSLT…QFSY. N-linked (GlcNAc...) asparagine glycans are attached at residues Asn-256 and Asn-293. Asn-354 is a glycosylation site (N-linked (GlcNAc...) asparagine). Residues Asn-440 and Asn-472 are each glycosylated (N-linked (GlcNAc...) asparagine). The N-linked (GlcNAc...) asparagine glycan is linked to Asn-525. Residues Asn-568, Asn-575, Asn-597, Asn-613, Asn-631, and Asn-635 are each glycosylated (N-linked (GlcNAc...) asparagine). Residues 657 to 677 traverse the membrane as a helical segment; the sequence is FKLFFGLGLLGFFLVFVVLAV. Residues 678–992 lie on the Cytoplasmic side of the membrane; the sequence is VKNRRMRKNN…ISQAKQPNTF (315 aa). Residues 710 to 992 enclose the Protein kinase domain; the sequence is VKENHVIGKG…ISQAKQPNTF (283 aa). Residues 716–724 and Lys-738 contribute to the ATP site; that span reads IGKGGRGIV. Asp-836 serves as the catalytic Proton acceptor.

It belongs to the protein kinase superfamily. Ser/Thr protein kinase family. Interacts with CLE45, especially in roots. Binds to the dimer CLV2/CRN. As to expression, expressed in seedlings, roots, leaves, stems, inflorescences, flowers and siliques. In roots, confined to protophloem and sieve element precursor cells.

The protein resides in the cell membrane. The protein localises to the endoplasmic reticulum membrane. It carries out the reaction L-seryl-[protein] + ATP = O-phospho-L-seryl-[protein] + ADP + H(+). The catalysed reaction is L-threonyl-[protein] + ATP = O-phospho-L-threonyl-[protein] + ADP + H(+). Its function is as follows. Necessary for male gametophyte development, as well as ovule specification and function. Required for the development of high-ordered vascular strands within the leaf and a correlated control of leaf shape, size and symmetry. LRR-rich receptor-like kinase (LRR-RLK) involved in the perception of CLE45 peptide ligand which mediates root growth inhibition by repressing protophloem differentiation; this mechanism requires CRN. BRX, BAM3, and CLE45 act together to regulate the transition of protophloem cells from proliferation to differentiation, thus impinging on postembryonic growth capacity of the root meristem. Necessary for CLE45 peptide-triggered accumulation of MAKR5 in developing sieve elements. The polypeptide is Leucine-rich repeat receptor-like serine/threonine-protein kinase BAM3 (Arabidopsis thaliana (Mouse-ear cress)).